We begin with the raw amino-acid sequence, 862 residues long: Protein sey1 (862 aa).

Positions 1–21 are disordered; it reads MNGHFAAVDNGNGSSPDSNAH. Topologically, residues 1–744 are cytoplasmic; it reads MNGHFAAVDN…KRSAIGGITQ (744 aa). Positions 11-21 are enriched in polar residues; it reads GNGSSPDSNAH. A GB1/RHD3-type G domain is found at 53 to 288; it reads GFNYHLISVF…LTGGVFLPEY (236 aa). Position 63-70 (63-70) interacts with GTP; it reads GSQSTGKS. A coiled-coil region spans residues 485-506; sequence FEKELDEVSARLRKEEMRRLAI. Residues 745 to 765 traverse the membrane as a helical segment; it reads VPLYFYAVLLVLGWNEFVMVL. The Lumenal segment spans residues 766-768; the sequence is RNP. A helical transmembrane segment spans residues 769–789; it reads ILFLLLLLISGGTYVAYSLNL. The Cytoplasmic portion of the chain corresponds to 790–862; that stretch reads LGPMMQMANA…ETGLGAEDDI (73 aa). Positions 840-862 are disordered; sequence ISMDTLDSNGKRKETGLGAEDDI.

Belongs to the TRAFAC class dynamin-like GTPase superfamily. GB1/RHD3 GTPase family. RHD3 subfamily.

The protein localises to the endoplasmic reticulum membrane. In terms of biological role, cooperates with the reticulon proteins and tubule-shaping DP1 family proteins to generate and maintain the structure of the tubular endoplasmic reticulum network. Has GTPase activity, which is required for its function in ER organization. In Neurospora crassa (strain ATCC 24698 / 74-OR23-1A / CBS 708.71 / DSM 1257 / FGSC 987), this protein is Protein sey1 (sey1).